A 267-amino-acid chain; its full sequence is Thiamine thiazole synthase (267 aa).

NAD(+) contacts are provided by residues serine 41, 60-61 (ER), glycine 68, valine 132, and 160-162 (HVD). Fe cation contacts are provided by aspartate 162 and histidine 177. Methionine 227 lines the NAD(+) pocket. Residue arginine 237 participates in glycine binding.

It belongs to the THI4 family. In terms of assembly, homooctamer; tetramer of dimers. Fe(2+) is required as a cofactor.

The catalysed reaction is hydrogen sulfide + glycine + NAD(+) = ADP-5-ethyl-4-methylthiazole-2-carboxylate + nicotinamide + 3 H2O + H(+). Its pathway is cofactor biosynthesis; thiamine diphosphate biosynthesis. Its function is as follows. Involved in the biosynthesis of the thiazole moiety of thiamine. Catalyzes the conversion of NAD and glycine to adenosine diphosphate 5-(2-hydroxyethyl)-4-methylthiazole-2-carboxylate (ADT), an adenylated thiazole intermediate, using free sulfide as a source of sulfur. The chain is Thiamine thiazole synthase from Saccharolobus islandicus (strain M.14.25 / Kamchatka #1) (Sulfolobus islandicus).